We begin with the raw amino-acid sequence, 345 residues long: Class I histocompatibility antigen, F10 alpha chain (345 aa).

The signal sequence occupies residues 1 to 22 (MGPCGALGLGLLLAAVCGAAAP). Residues 23–110 (ELHTLRYIQT…ILQRRYNQTG (88 aa)) form an alpha-1 region. Topologically, residues 23 to 301 (ELHTLRYIQT…WEPPQPNLVP (279 aa)) are extracellular. 2 N-linked (GlcNAc...) asparagine glycosylation sites follow: Asn-59 and Asn-107. The tract at residues 111–201 (GSHTVQWMYG…EYGKAELGRR (91 aa)) is alpha-2. Intrachain disulfides connect Cys-121-Cys-183 and Cys-221-Cys-277. Positions 202-292 (ERPEVRVWGK…SLPQPGLYSW (91 aa)) are alpha-3. The region spanning 204–293 (PEVRVWGKEA…LPQPGLYSWE (90 aa)) is the Ig-like C1-type domain. A connecting peptide region spans residues 293–301 (EPPQPNLVP). Residues 302–324 (IVAGVAVAIVAIAIMVGVGFIIY) traverse the membrane as a helical segment. The Cytoplasmic segment spans residues 325–345 (RRHAGKKGKGYNIAPGSNPAI).

Belongs to the MHC class I family. As to quaternary structure, heterodimer of an alpha chain and a beta chain (beta-2-microglobulin).

It localises to the membrane. Functionally, involved in the presentation of foreign antigens to the immune system. The protein is Class I histocompatibility antigen, F10 alpha chain of Gallus gallus (Chicken).